The following is a 705-amino-acid chain: Ribosomal RNA large subunit methyltransferase K/L (705 aa).

In terms of domain architecture, THUMP spans Leu43 to Leu154.

It belongs to the methyltransferase superfamily. RlmKL family.

Its subcellular location is the cytoplasm. The enzyme catalyses guanosine(2445) in 23S rRNA + S-adenosyl-L-methionine = N(2)-methylguanosine(2445) in 23S rRNA + S-adenosyl-L-homocysteine + H(+). It catalyses the reaction guanosine(2069) in 23S rRNA + S-adenosyl-L-methionine = N(2)-methylguanosine(2069) in 23S rRNA + S-adenosyl-L-homocysteine + H(+). Specifically methylates the guanine in position 2445 (m2G2445) and the guanine in position 2069 (m7G2069) of 23S rRNA. In Pectobacterium atrosepticum (strain SCRI 1043 / ATCC BAA-672) (Erwinia carotovora subsp. atroseptica), this protein is Ribosomal RNA large subunit methyltransferase K/L.